We begin with the raw amino-acid sequence, 288 residues long: Lysosomal thioesterase PPT2-B (288 aa).

A signal peptide spans 1–20; that stretch reads MRGYLLLLPLLLCLVDNSVS. Cysteine 95 and cysteine 103 form a disulfide bridge. Serine 97 serves as the catalytic Nucleophile. The N-linked (GlcNAc...) asparagine glycan is linked to asparagine 143. Cysteine 151 and cysteine 162 are oxidised to a cystine. An N-linked (GlcNAc...) asparagine glycan is attached at asparagine 192. Active-site residues include aspartate 214 and histidine 269. N-linked (GlcNAc...) asparagine glycosylation is present at asparagine 275.

Belongs to the palmitoyl-protein thioesterase family.

It is found in the lysosome. The enzyme catalyses hexadecanoyl-CoA + H2O = hexadecanoate + CoA + H(+). It carries out the reaction S-hexadecanoyl-N-acetylcysteamine + H2O = N-acetylcysteamine + hexadecanoate + H(+). Its function is as follows. Catalyzes the cleavage of thioester bonds from S-palmitoyl-CoA or S-palmitoyl-N-acetylcysteamine (unbranched structures) but does not have activity against palmitoylcysteine or palmitoylated proteins, branched structures or bulky head groups. Conversely, hydrolyzes both long and short chain fatty acyl-CoA substrate. In Xenopus laevis (African clawed frog), this protein is Lysosomal thioesterase PPT2-B (ppt2-b).